Consider the following 493-residue polypeptide: Galactose-1-phosphate uridylyltransferase (493 aa).

It belongs to the galactose-1-phosphate uridylyltransferase type 2 family.

It is found in the cytoplasm. It catalyses the reaction alpha-D-galactose 1-phosphate + UDP-alpha-D-glucose = alpha-D-glucose 1-phosphate + UDP-alpha-D-galactose. It participates in carbohydrate metabolism; galactose metabolism. In Lactococcus lactis subsp. cremoris (strain MG1363), this protein is Galactose-1-phosphate uridylyltransferase.